Consider the following 193-residue polypeptide: Holliday junction branch migration complex subunit RuvA (193 aa).

The interval Met1 to Gly64 is domain I. The interval Ser65–Ala143 is domain II. Residues Pro144–Asp151 are flexible linker. The segment at Asp151–Ala193 is domain III.

It belongs to the RuvA family. As to quaternary structure, homotetramer. Forms an RuvA(8)-RuvB(12)-Holliday junction (HJ) complex. HJ DNA is sandwiched between 2 RuvA tetramers; dsDNA enters through RuvA and exits via RuvB. An RuvB hexamer assembles on each DNA strand where it exits the tetramer. Each RuvB hexamer is contacted by two RuvA subunits (via domain III) on 2 adjacent RuvB subunits; this complex drives branch migration. In the full resolvosome a probable DNA-RuvA(4)-RuvB(12)-RuvC(2) complex forms which resolves the HJ.

It localises to the cytoplasm. Its function is as follows. The RuvA-RuvB-RuvC complex processes Holliday junction (HJ) DNA during genetic recombination and DNA repair, while the RuvA-RuvB complex plays an important role in the rescue of blocked DNA replication forks via replication fork reversal (RFR). RuvA specifically binds to HJ cruciform DNA, conferring on it an open structure. The RuvB hexamer acts as an ATP-dependent pump, pulling dsDNA into and through the RuvAB complex. HJ branch migration allows RuvC to scan DNA until it finds its consensus sequence, where it cleaves and resolves the cruciform DNA. The sequence is that of Holliday junction branch migration complex subunit RuvA from Cupriavidus pinatubonensis (strain JMP 134 / LMG 1197) (Cupriavidus necator (strain JMP 134)).